The primary structure comprises 84 residues: Large ribosomal subunit protein bL27 (84 aa).

Positions 1–25 (MAHKKAGGSSKNGRDSAGKRLGVKR) are disordered.

It belongs to the bacterial ribosomal protein bL27 family.

This is Large ribosomal subunit protein bL27 from Syntrophotalea carbinolica (strain DSM 2380 / NBRC 103641 / GraBd1) (Pelobacter carbinolicus).